The sequence spans 393 residues: Sedoheptulose-1,7-bisphosphatase, chloroplastic (393 aa).

A disulfide bridge connects residues Cys-115 and Cys-120. Mg(2+)-binding residues include Asp-126, Glu-155, Asp-176, Leu-178, and Asp-179. Substrate is bound by residues 179 to 182 (DGSS), Tyr-290, and Lys-320. Residue Glu-326 coordinates Mg(2+).

It belongs to the FBPase class 1 family. Homodimer. It depends on Mg(2+) as a cofactor.

Its subcellular location is the plastid. It is found in the chloroplast. The catalysed reaction is D-sedoheptulose 1,7-bisphosphate + H2O = D-sedoheptulose 7-phosphate + phosphate. It participates in carbohydrate biosynthesis; Calvin cycle. This chain is Sedoheptulose-1,7-bisphosphatase, chloroplastic, found in Triticum aestivum (Wheat).